Here is a 504-residue protein sequence, read N- to C-terminus: Probable phenylalanine--tRNA ligase beta subunit (504 aa).

The B5 domain occupies 270–346 (IKDKSYLLSI…ICYGFNNINM (77 aa)). Residues aspartate 324, aspartate 330, glutamate 333, and aspartate 334 each contribute to the Mg(2+) site.

It belongs to the phenylalanyl-tRNA synthetase beta subunit family. Type 2 subfamily. As to quaternary structure, tetramer of two alpha and two beta subunits. It depends on Mg(2+) as a cofactor.

Its subcellular location is the cytoplasm. The catalysed reaction is tRNA(Phe) + L-phenylalanine + ATP = L-phenylalanyl-tRNA(Phe) + AMP + diphosphate + H(+). This chain is Probable phenylalanine--tRNA ligase beta subunit, found in Vairimorpha ceranae (strain BRL01) (Microsporidian parasite).